Consider the following 611-residue polypeptide: Zinc metalloproteinase-disintegrin-like ohanin (611 aa).

Positions 1–20 are cleaved as a signal peptide; that stretch reads MIQVLLVTICLVVFPYQGSS. A propeptide spanning residues 21 to 187 is cleaved from the precursor; it reads IILESGKVND…WESDEPIEKI (167 aa). Residues 198-393 form the Peptidase M12B domain; sequence KYLELYIVAD…DTPQCLINKP (196 aa). N-linked (GlcNAc...) asparagine glycosylation is found at N217 and N260. 3 disulfide bridges follow: C307-C388, C347-C372, and C349-C354. H332 lines the Zn(2+) pocket. E333 is an active-site residue. Residues H336 and H342 each coordinate Zn(2+). An N-linked (GlcNAc...) asparagine glycan is attached at N395. In terms of domain architecture, Disintegrin spans 401–487; sequence NAVCGNYVEE…ECPMDRFHKN (87 aa). 14 cysteine pairs are disulfide-bonded: C404–C433, C415–C428, C417–C423, C427–C450, C441–C447, C446–C472, C459–C479, C466–C498, C491–C503, C510–C560, C525–C578, C538–C548, C555–C603, and C597–C608. The D/ECD-tripeptide signature appears at 465 to 467; the sequence is ECD. N528 carries an N-linked (GlcNAc...) asparagine glycan.

It belongs to the venom metalloproteinase (M12B) family. P-III subfamily. P-IIIa sub-subfamily. In terms of assembly, monomer. Zn(2+) serves as cofactor. As to expression, expressed by the venom gland.

Its subcellular location is the secreted. Its activity is regulated as follows. Inhibited by EDTA, but not by PMSF. In terms of biological role, snake venom zinc metalloproteinase that has hemorrhagic activity. Inhibits ADP-, TMVA- and stejnulxin-induced platelet aggregation in a dose-dependent manner (on washed platelet, but not on platelet rich plasm). Also specifically degrades alpha-chain of fibrinogen (FGA). The sequence is that of Zinc metalloproteinase-disintegrin-like ohanin from Ophiophagus hannah (King cobra).